Reading from the N-terminus, the 393-residue chain is Squamosa promoter-binding-like protein 11 (393 aa).

Residues 74-96 (QSTSINSSSPEAKRCKLASESSP) form a disordered region. The SBP-type zinc finger occupies 172 to 249 (VPRCQIDGCE…SHHNARRRKP (78 aa)). Residues cysteine 175, cysteine 180, cysteine 197, histidine 200, cysteine 216, cysteine 219, histidine 223, and cysteine 235 each contribute to the Zn(2+) site. The Bipartite nuclear localization signal signature appears at 232–248 (KRSCRKRLSHHNARRRK).

Zn(2+) serves as cofactor.

The protein resides in the nucleus. Trans-acting factor that binds specifically to the consensus nucleotide sequence 5'-TNCGTACAA-3'. This chain is Squamosa promoter-binding-like protein 11 (SPL11), found in Arabidopsis thaliana (Mouse-ear cress).